A 300-amino-acid chain; its full sequence is Putative S-adenosyl-L-methionine-dependent methyltransferase MUL_0817 (300 aa).

Residues aspartate 127 and 156–157 (DL) each bind S-adenosyl-L-methionine.

The protein belongs to the UPF0677 family.

In terms of biological role, exhibits S-adenosyl-L-methionine-dependent methyltransferase activity. The protein is Putative S-adenosyl-L-methionine-dependent methyltransferase MUL_0817 of Mycobacterium ulcerans (strain Agy99).